A 284-amino-acid polypeptide reads, in one-letter code: RNase adapter protein RapZ (284 aa).

8–15 (GRSGSGKS) lines the ATP pocket. Residue 56 to 59 (DVRN) coordinates GTP. An RNA-binding region spans residues 266–284 (RSRGKNVQSRHRTLEKRKP).

This sequence belongs to the RapZ-like family. RapZ subfamily. Homotrimer.

Modulates the synthesis of GlmS, by affecting the processing and stability of the regulatory small RNA GlmZ. When glucosamine-6-phosphate (GlcN6P) concentrations are high in the cell, RapZ binds GlmZ and targets it to cleavage by RNase E. Consequently, GlmZ is inactivated and unable to activate GlmS synthesis. Under low GlcN6P concentrations, RapZ is sequestered and inactivated by an other regulatory small RNA, GlmY, preventing GlmZ degradation and leading to synthesis of GlmS. In Shigella boydii serotype 18 (strain CDC 3083-94 / BS512), this protein is RNase adapter protein RapZ.